The sequence spans 231 residues: S-norcoclaurine synthase 1 (231 aa).

107–109 (YKE) provides a ligand contact to dopamine. Lys-121 functions as the Proton donor in the catalytic mechanism. Residue Asp-140 coordinates (4-hydroxyphenyl)acetaldehyde. Residues 210–230 (LLLCLIICLVIAGGMFVAGVP) form a helical membrane-spanning segment.

It belongs to the BetVI family. As to expression, detected in roots, stems, leaves, flower buds and germinating seeds.

It localises to the membrane. The enzyme catalyses (4-hydroxyphenyl)acetaldehyde + dopamine = (S)-norcoclaurine + H2O. Its pathway is alkaloid biosynthesis; (S)-reticuline biosynthesis. Its activity is regulated as follows. Activity doubles within 5 hours of elicitor treatment and continues to increase for at least 80 hours. In terms of biological role, involved in the biosynthesis of (S)-coclaurine, the common precursor of all benzylisoquinoline alkaloids such as morphine, sanguinarine, codeine or papaverine. Condenses dopamine and 4-hydroxyphenylacetaldehyde. This is S-norcoclaurine synthase 1 from Papaver somniferum (Opium poppy).